Consider the following 123-residue polypeptide: Snaclec echicetin subunit beta (123 aa).

One can recognise a C-type lectin domain in the interval 1 to 121 (NCLPDWSVYE…SGEFYFVCKC (121 aa)). Cystine bridges form between Cys2–Cys13, Cys30–Cys119, and Cys96–Cys111.

It belongs to the snaclec family. As to quaternary structure, heterodimer of subunits alpha and beta; disulfide-linked. Forms an active complex with the pentameric immunoglobuline Mkappa (IgMkappa). In terms of tissue distribution, expressed by the venom gland.

It localises to the secreted. Echicetin itself inhibits aggregation of washed platelets induced by vWF, thrombin or alboaggregin-A. However, when complexed with the pentameric plasma immunoglobulin Mkappa (IgMkappa), echicetin binds specifically to GPIb and activates platelets. This is caused by P-selectin expression and activation of alpha-IIb/beta-3 as well as tyrosine phosphorylation of several signal transduction molecules, including p53/56(LYN), p64, p72(SYK), p70 to p90, and p120. In vivo, it induces thrombocytopenia when injected into mice, probably accounting of activation of platelets rather than inhibition. This is Snaclec echicetin subunit beta from Echis carinatus sochureki (Saw-scaled viper).